The following is a 306-amino-acid chain: tRNA pseudouridine synthase B (306 aa).

Aspartate 47 functions as the Nucleophile in the catalytic mechanism.

The protein belongs to the pseudouridine synthase TruB family. Type 1 subfamily.

It carries out the reaction uridine(55) in tRNA = pseudouridine(55) in tRNA. In terms of biological role, responsible for synthesis of pseudouridine from uracil-55 in the psi GC loop of transfer RNAs. The protein is tRNA pseudouridine synthase B of Neisseria gonorrhoeae (strain NCCP11945).